Consider the following 221-residue polypeptide: U1 small nuclear ribonucleoprotein C (221 aa).

A Matrin-type zinc finger spans residues 4-36; sequence YFCDYCDTYLTHDSPSVRKTHCNGRKHKENVRV. Residues 100-168 are disordered; it reads SNPFPTSQAG…PPGAPTLPQP (69 aa). The segment covering 134-166 has biased composition (pro residues); it reads APAPPRMPGPLLMTPPPGAAAPGMAPPGAPTLP.

It belongs to the U1 small nuclear ribonucleoprotein C family. As to quaternary structure, U1 snRNP is composed of the 7 core Sm proteins B/B', D1, D2, D3, E, F and G that assemble in a heptameric protein ring on the Sm site of the small nuclear RNA to form the core snRNP, and at least 3 U1 snRNP-specific proteins U1-70K, U1-A and U1-C. U1-C interacts with U1 snRNA and the 5' splice-site region of the pre-mRNA.

It is found in the nucleus. Component of the spliceosomal U1 snRNP, which is essential for recognition of the pre-mRNA 5' splice-site and the subsequent assembly of the spliceosome. U1-C is directly involved in initial 5' splice-site recognition for both constitutive and regulated alternative splicing. The interaction with the 5' splice-site seems to precede base-pairing between the pre-mRNA and the U1 snRNA. Stimulates commitment or early (E) complex formation by stabilizing the base pairing of the 5' end of the U1 snRNA and the 5' splice-site region. This is U1 small nuclear ribonucleoprotein C from Branchiostoma floridae (Florida lancelet).